A 347-amino-acid chain; its full sequence is Holliday junction branch migration complex subunit RuvB (347 aa).

The large ATPase domain (RuvB-L) stretch occupies residues 1–186 (MKDENSINFL…FGITARFELY (186 aa)). Residues Leu25, Arg26, Gly67, Lys70, Thr71, Thr72, 133 to 135 (EDY), Arg176, Tyr186, and Arg223 each bind ATP. Thr71 serves as a coordination point for Mg(2+). Residues 187–257 (SEIELVEIIK…IVSIGLEMLR (71 aa)) form a small ATPAse domain (RuvB-S) region. The interval 260 to 347 (GEGLDEQDRN…DISENQRVSF (88 aa)) is head domain (RuvB-H). DNA-binding residues include Arg315 and Arg320.

It belongs to the RuvB family. In terms of assembly, homohexamer. Forms an RuvA(8)-RuvB(12)-Holliday junction (HJ) complex. HJ DNA is sandwiched between 2 RuvA tetramers; dsDNA enters through RuvA and exits via RuvB. An RuvB hexamer assembles on each DNA strand where it exits the tetramer. Each RuvB hexamer is contacted by two RuvA subunits (via domain III) on 2 adjacent RuvB subunits; this complex drives branch migration. In the full resolvosome a probable DNA-RuvA(4)-RuvB(12)-RuvC(2) complex forms which resolves the HJ.

The protein localises to the cytoplasm. The enzyme catalyses ATP + H2O = ADP + phosphate + H(+). Its function is as follows. The RuvA-RuvB-RuvC complex processes Holliday junction (HJ) DNA during genetic recombination and DNA repair, while the RuvA-RuvB complex plays an important role in the rescue of blocked DNA replication forks via replication fork reversal (RFR). RuvA specifically binds to HJ cruciform DNA, conferring on it an open structure. The RuvB hexamer acts as an ATP-dependent pump, pulling dsDNA into and through the RuvAB complex. RuvB forms 2 homohexamers on either side of HJ DNA bound by 1 or 2 RuvA tetramers; 4 subunits per hexamer contact DNA at a time. Coordinated motions by a converter formed by DNA-disengaged RuvB subunits stimulates ATP hydrolysis and nucleotide exchange. Immobilization of the converter enables RuvB to convert the ATP-contained energy into a lever motion, pulling 2 nucleotides of DNA out of the RuvA tetramer per ATP hydrolyzed, thus driving DNA branch migration. The RuvB motors rotate together with the DNA substrate, which together with the progressing nucleotide cycle form the mechanistic basis for DNA recombination by continuous HJ branch migration. Branch migration allows RuvC to scan DNA until it finds its consensus sequence, where it cleaves and resolves cruciform DNA. The protein is Holliday junction branch migration complex subunit RuvB of Borrelia garinii subsp. bavariensis (strain ATCC BAA-2496 / DSM 23469 / PBi) (Borreliella bavariensis).